The chain runs to 210 residues: 3-hexulose-6-phosphate synthase (210 aa).

This sequence belongs to the HPS/KGPDC family. HPS subfamily.

The catalysed reaction is D-ribulose 5-phosphate + formaldehyde = D-arabino-hex-3-ulose 6-phosphate. The protein operates within one-carbon metabolism; formaldehyde assimilation via RuMP pathway; D-fructose 6-phosphate from D-ribulose 5-phosphate and formaldehyde: step 1/2. Functionally, catalyzes the condensation of ribulose 5-phosphate with formaldehyde to form 3-hexulose 6-phosphate. The sequence is that of 3-hexulose-6-phosphate synthase from Staphylococcus haemolyticus (strain JCSC1435).